A 166-amino-acid chain; its full sequence is Large ribosomal subunit protein mL49 (166 aa).

A disordered region spans residues 56–78 (RIPDPPKHEHYPTPSGWQPPRDP).

This sequence belongs to the mitochondrion-specific ribosomal protein mL49 family. Component of the mitochondrial large ribosomal subunit (mt-LSU). Mature mammalian 55S mitochondrial ribosomes consist of a small (28S) and a large (39S) subunit. The 28S small subunit contains a 12S ribosomal RNA (12S mt-rRNA) and 30 different proteins. The 39S large subunit contains a 16S rRNA (16S mt-rRNA), a copy of mitochondrial valine transfer RNA (mt-tRNA(Val)), which plays an integral structural role, and 52 different proteins. Interacts with OXA1L. Ubiquitous.

It is found in the mitochondrion. The sequence is that of Large ribosomal subunit protein mL49 (MRPL49) from Homo sapiens (Human).